A 386-amino-acid chain; its full sequence is GTPase Obg (386 aa).

One can recognise an Obg domain in the interval 1 to 159 (MKFIDEARIE…RTLKLELKVL (159 aa)). In terms of domain architecture, OBG-type G spans 160–348 (ADVGLLGMPN…LTFAIMSYLD (189 aa)). GTP contacts are provided by residues 166-173 (GMPNAGKS), 191-195 (FTTLH), 213-216 (DIPG), 284-287 (NKVD), and 329-331 (SAL). Mg(2+)-binding residues include S173 and T193.

The protein belongs to the TRAFAC class OBG-HflX-like GTPase superfamily. OBG GTPase family. Monomer. The cofactor is Mg(2+).

Its subcellular location is the cytoplasm. Its function is as follows. An essential GTPase which binds GTP, GDP and possibly (p)ppGpp with moderate affinity, with high nucleotide exchange rates and a fairly low GTP hydrolysis rate. Plays a role in control of the cell cycle, stress response, ribosome biogenesis and in those bacteria that undergo differentiation, in morphogenesis control. The chain is GTPase Obg from Chromobacterium violaceum (strain ATCC 12472 / DSM 30191 / JCM 1249 / CCUG 213 / NBRC 12614 / NCIMB 9131 / NCTC 9757 / MK).